The sequence spans 238 residues: Lipid transferase CIDEC (238 aa).

The tract at residues 1–35 (MDYAMKSLSLLYPRSLSRHVAVSTAVVTQQLVSEP) is required for liquid-liquid phase separation (LLPS). Residues 41–118 (RARPCRVSTA…VLQKGQKWKS (78 aa)) form the CIDE-N domain.

Belongs to the CIDE family. In terms of assembly, homodimer. Interacts with CIDEA. Homooligomer; undergoes liquid-liquid phase separation (LLPS) via its N-terminus, facilitating lipid droplet fusion, occurs at the lipid droplet contact sites. Interacts with PLIN1. Interacts with NFAT5; this interaction is direct and retains NFAT5 in the cytoplasm. Interacts with CEBPB. Interacts with isoform CLSTN3beta of CLSTN3; inhibiting the lipid transferase activity of CIDEC. Ubiquitinated and targeted to proteasomal degradation, resulting in a short half-life (about 15 minutes in 3T3-L1 cells). Protein stability depends on triaclyglycerol synthesis, fatty acid availability and lipid droplet formation.

It is found in the lipid droplet. The protein resides in the endoplasmic reticulum. Its subcellular location is the nucleus. The enzyme catalyses a triacyl-sn-glycerol(in) = a triacyl-sn-glycerol(out). Its function is as follows. Lipid transferase specifically expressed in white adipose tissue, which promotes unilocular lipid droplet formation by mediating lipid droplet fusion. Lipid droplet fusion promotes their enlargement, restricting lipolysis and favoring lipid storage. Localizes on the lipid droplet surface, at focal contact sites between lipid droplets, and mediates atypical lipid droplet fusion by undergoing liquid-liquid phase separation (LLPS) and promoting directional net neutral lipid transfer from the smaller to larger lipid droplets. The transfer direction may be driven by the internal pressure difference between the contacting lipid droplet pair. Its role in neutral lipid transfer and lipid droplet enlargement is activated by the interaction with PLIN1. May also act as a CEBPB coactivator in the white adipose tissue to control the expression of a subset of CEBPB downstream target genes, including SOCS1, SOCS3, TGFB1, TGFBR1, ID2 and XDH. When overexpressed in preadipocytes, induces apoptosis or increases cell susceptibility to apoptosis induced by serum deprivation or TGFB treatment. In Rattus norvegicus (Rat), this protein is Lipid transferase CIDEC.